A 131-amino-acid polypeptide reads, in one-letter code: Large ribosomal subunit protein bL17 (131 aa).

It belongs to the bacterial ribosomal protein bL17 family. In terms of assembly, part of the 50S ribosomal subunit. Contacts protein L32.

The sequence is that of Large ribosomal subunit protein bL17 from Finegoldia magna (strain ATCC 29328 / DSM 20472 / WAL 2508) (Peptostreptococcus magnus).